Reading from the N-terminus, the 199-residue chain is Potassium-transporting ATPase KdpC subunit 2 (199 aa).

The chain crosses the membrane as a helical span at residues 13–33 (ITLIFWLVTAIIYPLAILVVG).

Belongs to the KdpC family. The system is composed of three essential subunits: KdpA, KdpB and KdpC.

The protein resides in the cell inner membrane. Functionally, part of the high-affinity ATP-driven potassium transport (or Kdp) system, which catalyzes the hydrolysis of ATP coupled with the electrogenic transport of potassium into the cytoplasm. This subunit acts as a catalytic chaperone that increases the ATP-binding affinity of the ATP-hydrolyzing subunit KdpB by the formation of a transient KdpB/KdpC/ATP ternary complex. The protein is Potassium-transporting ATPase KdpC subunit 2 of Nostoc sp. (strain PCC 7120 / SAG 25.82 / UTEX 2576).